A 305-amino-acid polypeptide reads, in one-letter code: MDFILNYALFFFKIFTLFALILTIFLIIVNVARHKSKKKYELDIVSLNSYYEHVKNKIILSTMSTYEKKIWNKSNKLFKKTRSKINMTFLKKNKYYLNQNNPILYVLDFKGNVSASEVTSLREEISAIILAAKENDEVLLRLESGGGVIHGYGLASSQLSRLREKNIRLTVSVDKIAASGGYMMACVANYIIAAPFSVIGSIGVVAQIPNFNKLLKKNNVDMELHTSGLYKRTLTVFGENTKEAREKFCKDLNFTHVLFKEFVHSMRPSLNIDEVSTGEHWFGTTALEKKLIDKIETSDDFIISR.

A helical transmembrane segment spans residues 9–29 (LFFFKIFTLFALILTIFLIIV). Ser-179 (nucleophile) is an active-site residue. The chain crosses the membrane as a helical span at residues 185–205 (ACVANYIIAAPFSVIGSIGVV). Lys-231 (proton donor/acceptor) is an active-site residue.

It belongs to the peptidase S49 family.

It is found in the cell membrane. The sequence is that of Probable protease SohB (sohB) from Buchnera aphidicola subsp. Schlechtendalia chinensis.